The chain runs to 421 residues: Stemmadenine O-acetyltransferase (421 aa).

Residues 1-21 (MAPQMQILSEELIQPSSPTPQ) are disordered. Residues H160 and D362 each act as proton acceptor in the active site.

This sequence belongs to the plant acyltransferase family. Monomer. As to expression, expressed in leaf epidermis.

The catalysed reaction is 15alpha-stemmadenine + acetyl-CoA = O-acetyl-15alpha-stemmadenine + CoA. The protein operates within alkaloid biosynthesis. In terms of biological role, component of iboga and aspidosperma monoterpenoid indole alkaloids (MIAs, e.g. tabersonine and catharanthine) biosynthesis pathway from 19E-geissoschizine. Acetyltransferase that catalyzes the formation of O-acetylstemmadenine from stemmadenine. This chain is Stemmadenine O-acetyltransferase, found in Catharanthus roseus (Madagascar periwinkle).